A 65-amino-acid chain; its full sequence is Large ribosomal subunit protein bL35 (65 aa).

Positions 1 to 16 are enriched in basic residues; that stretch reads MPKMKTKSSAKKRFKV. Residues 1–26 form a disordered region; that stretch reads MPKMKTKSSAKKRFKVRSSGGIKRSQ.

It belongs to the bacterial ribosomal protein bL35 family.

The chain is Large ribosomal subunit protein bL35 from Azoarcus sp. (strain BH72).